The primary structure comprises 619 residues: MSANNPSCASRDPPPKKVRTFFSSIRRLSRPICIDDFIDITADLGDTIGAALKSFQQNNACTQEQSEQFTREVYDVCKNILQENKFRNEMFGFVADMNLLNLFALFRSYKQRVRTHFGKQLLCATASSQIIRFFLERVIRHTDKWFLLAPCNGLILPQELAKEMYVLLSEARGKALNQGRMFSGGRQNMMNAAKKVLTVYSSLRDDGEISPEVKAYMAYIFPVPDIEQVFQPLFKLEQEIRKGKATLTQSLLFAPRKRCPNKTVFSQYGARQRYVLPEVLLEASEPQSTLAYGCPDISSLLRDSSSTQENTDEESGPCCSKTLSPGVPQPQSEYDPSPTSPPDSDTESCDSQVRPESTDSDTHAEDDDVPEAPQAASQTQPTTTQETQSCCSVYNPATTQTGFYYNQQSSDNFASRIDASATSTSYGYPGPVTNHGFSTSVFSHTVPTTATGQQQLHQNMYGGGQQTTTYGSYVGGYSDANGQSVGASTSYYTSKPATSRSSTALQWTTLFPPASSSASSSQVSDYFSGFPYFPGSSTVPQAFEPLAPSTPSLLDELLDRDSGLVSQQQAPAPPQNDQGGPPQYVPVAQEQQQSSTDPLSDEMRRIFEFFDSVNPVTRP.

Disordered regions lie at residues leucine 301 to serine 389 and glycine 563 to methionine 603. 2 stretches are compositionally biased toward low complexity: residues glutamate 371 to serine 389 and glutamine 567 to proline 582. Over residues glutamine 589–proline 598 the composition is skewed to polar residues.

The protein belongs to the herpesviridae TAF50 family.

Its function is as follows. Transcription activation. The polypeptide is Putative transcription activator BRLF1 homolog (50) (Connochaetes taurinus (Blue wildebeest)).